The chain runs to 410 residues: Platelet-activating factor acetylhydrolase IB subunit alpha (410 aa).

A required for self-association and interaction with PAFAH1B2 and PAFAH1B3 region spans residues 1-38; the sequence is MVLSQRQRDELNRAIADYLRSNGYEEAYSVFKKEAELD. An interaction with NDE1 region spans residues 1–66; sequence MVLSQRQRDE…SVIRLQKKVM (66 aa). The interaction with NDEL1 stretch occupies residues 1-102; that stretch reads MVLSQRQRDE…EWIPRPPEKY (102 aa). In terms of domain architecture, LisH spans 7–39; it reads QRDELNRAIADYLRSNGYEEAYSVFKKEAELDM. Lys53 is subject to N6-acetyllysine. The stretch at 56-82 forms a coiled coil; the sequence is TSVIRLQKKVMELESKLNEAKEEFTSG. The interval 83–410 is interaction with dynein and dynactin; sequence GPLGQKRDPK…DQTVKVWECR (328 aa). WD repeat units follow at residues 106–147, 148–187, 190–229, 232–271, 274–333, 336–377, and 378–410; these read GHRS…RTLK, GHTDSVQDISFDHSGKLLASCSADMTIKLWDFQGFECIRT, GHDHNVSSVAIMPNGDHIVSAARDKTIKMWEVQTGYCVKT, GHREWVRMVRPNQDGTLIASCSNDQTVRVWVVATKECKAE, EHEH…CLMT, GHDN…KTLN, and AHEHFVTSLDFHKTAPYVVTGSVDQTVKVWECR. Residue Ser109 is modified to Phosphoserine. The segment at 367 to 409 is interaction with DCX; it reads YKNKRCMKTLNAHEHFVTSLDFHKTAPYVVTGSVDQTVKVWEC. Positions 388-410 are interaction with NDEL1; that stretch reads FHKTAPYVVTGSVDQTVKVWECR.

It belongs to the WD repeat LIS1/nudF family. Can self-associate. Component of the cytosolic PAF-AH (I) heterotetrameric enzyme, which is composed of PAFAH1B1 (beta), PAFAH1B2 (alpha2) and PAFAH1B3 (alpha1) subunits. The catalytic activity of the enzyme resides in the alpha1 (PAFAH1B3) and alpha2 (PAFAH1B2) subunits, whereas the beta subunit (PAFAH1B1) has regulatory activity. Trimer formation is not essential for the catalytic activity. Interacts with the catalytic dimer of PAF-AH (I) heterotetrameric enzyme: interacts with PAFAH1B2 homodimer (alpha2/alpha2 homodimer), PAFAH1B3 homodimer (alpha1/alpha1 homodimer) and PAFAH1B2-PAFAH1B3 heterodimer (alpha2/alpha1 heterodimer). Interacts with DCX, dynein, dynactin, IQGAP1, KATNB1, NDE1, NDEL1, NUDC and RSN. Interacts with DISC1, and this interaction is enhanced by NDEL1. Interacts with DAB1 when DAB1 is phosphorylated in response to RELN/reelin signaling. Interacts with INTS13. Interacts with DCDC1.

The protein resides in the cytoplasm. Its subcellular location is the cytoskeleton. It is found in the microtubule organizing center. The protein localises to the centrosome. It localises to the spindle. The protein resides in the nucleus membrane. Regulatory subunit (beta subunit) of the cytosolic type I platelet-activating factor (PAF) acetylhydrolase (PAF-AH (I)), an enzyme that catalyzes the hydrolyze of the acetyl group at the sn-2 position of PAF and its analogs and participates in PAF inactivation. Regulates the PAF-AH (I) activity in a catalytic dimer composition-dependent manner. Positively regulates the activity of the minus-end directed microtubule motor protein dynein. May enhance dynein-mediated microtubule sliding by targeting dynein to the microtubule plus end. Required for several dynein- and microtubule-dependent processes such as the maintenance of Golgi integrity, the peripheral transport of microtubule fragments and the coupling of the nucleus and centrosome. Required during brain development for the proliferation of neuronal precursors and the migration of newly formed neurons from the ventricular/subventricular zone toward the cortical plate. Neuronal migration involves a process called nucleokinesis, whereby migrating cells extend an anterior process into which the nucleus subsequently translocates. During nucleokinesis dynein at the nuclear surface may translocate the nucleus towards the centrosome by exerting force on centrosomal microtubules. Also required for proper activation of Rho GTPases and actin polymerization at the leading edge of locomoting cerebellar neurons and postmigratory hippocampal neurons in response to calcium influx triggered via NMDA receptors. May also play a role in other forms of cell locomotion including the migration of fibroblasts during wound healing. Required for dynein recruitment to microtubule plus ends and BICD2-bound cargos. May modulate the Reelin pathway through interaction of the PAF-AH (I) catalytic dimer with VLDLR. This Sus scrofa (Pig) protein is Platelet-activating factor acetylhydrolase IB subunit alpha.